Reading from the N-terminus, the 440-residue chain is GTPase Der (440 aa).

EngA-type G domains follow at residues 4 to 168 (PIVA…NPED) and 177 to 352 (IKVA…NQNA). Residues 10-17 (GRPNVGKS), 57-61 (DTGGI), 120-123 (NKVD), 183-190 (GKPNVGKS), 230-234 (DTAGI), and 295-298 (NKWD) contribute to the GTP site. The KH-like domain occupies 353–437 (MRIPTGALNE…PIRFILREKT (85 aa)).

Belongs to the TRAFAC class TrmE-Era-EngA-EngB-Septin-like GTPase superfamily. EngA (Der) GTPase family. As to quaternary structure, associates with the 50S ribosomal subunit.

Its function is as follows. GTPase that plays an essential role in the late steps of ribosome biogenesis. In Alkaliphilus oremlandii (strain OhILAs) (Clostridium oremlandii (strain OhILAs)), this protein is GTPase Der.